Here is a 151-residue protein sequence, read N- to C-terminus: Prefoldin subunit alpha (151 aa).

The protein belongs to the prefoldin subunit alpha family. In terms of assembly, heterohexamer of two alpha and four beta subunits.

The protein resides in the cytoplasm. Molecular chaperone capable of stabilizing a range of proteins. Seems to fulfill an ATP-independent, HSP70-like function in archaeal de novo protein folding. In Sulfurisphaera tokodaii (strain DSM 16993 / JCM 10545 / NBRC 100140 / 7) (Sulfolobus tokodaii), this protein is Prefoldin subunit alpha.